The chain runs to 116 residues: Phycoerythrin alpha-3 subunit (116 aa).

Residues serine 53, glutamate 63, arginine 64, cysteine 67, and lysine 85 each coordinate (2R,3E)-phycoerythrobilin.

This sequence belongs to the phycoerythrin family. Heterotetramer of 2 different alpha chains and 2 identical beta chains which form 2 alpha-beta heterodimers within the heterotetramer. The two alpha-beta heterodimers are rotated to an open configuration in contrast to the closed configuration found in other cryptophyte species due to the insertion of a single amino acid, Asp-65, in a conserved region of the alpha chain. In the open form, the central chromophores are not in physical contact but are separated by a water-filled channel. In terms of processing, contains three phycoerythrobilin chromophores with binding mediated by both the alpha and beta subunits.

The protein localises to the plastid. Its subcellular location is the chloroplast thylakoid membrane. Light-harvesting photosynthetic tetrapyrrole chromophore-protein from the phycobiliprotein complex. The protein is Phycoerythrin alpha-3 subunit of Hemiselmis andersenii (Cryptophyte alga).